A 239-amino-acid chain; its full sequence is tRNA (guanine-N(7)-)-methyltransferase (239 aa).

S-adenosyl-L-methionine-binding residues include glutamate 69, glutamate 94, aspartate 121, and aspartate 144. Aspartate 144 is a catalytic residue. Lysine 148 is a binding site for substrate. An interaction with RNA region spans residues 150-155 (RHNKRR). Substrate-binding positions include aspartate 180 and 217–220 (TKFE).

This sequence belongs to the class I-like SAM-binding methyltransferase superfamily. TrmB family. In terms of assembly, monomer.

It catalyses the reaction guanosine(46) in tRNA + S-adenosyl-L-methionine = N(7)-methylguanosine(46) in tRNA + S-adenosyl-L-homocysteine. It functions in the pathway tRNA modification; N(7)-methylguanine-tRNA biosynthesis. In terms of biological role, catalyzes the formation of N(7)-methylguanine at position 46 (m7G46) in tRNA. This Shigella dysenteriae serotype 1 (strain Sd197) protein is tRNA (guanine-N(7)-)-methyltransferase.